Here is a 350-residue protein sequence, read N- to C-terminus: Uroporphyrinogen decarboxylase (350 aa).

Substrate-binding positions include 27–31, phenylalanine 46, aspartate 76, tyrosine 152, serine 207, and histidine 321; that span reads RQAGR.

Belongs to the uroporphyrinogen decarboxylase family. In terms of assembly, homodimer.

The protein resides in the cytoplasm. The enzyme catalyses uroporphyrinogen III + 4 H(+) = coproporphyrinogen III + 4 CO2. It functions in the pathway porphyrin-containing compound metabolism; protoporphyrin-IX biosynthesis; coproporphyrinogen-III from 5-aminolevulinate: step 4/4. Functionally, catalyzes the decarboxylation of four acetate groups of uroporphyrinogen-III to yield coproporphyrinogen-III. In Listeria monocytogenes serotype 4a (strain HCC23), this protein is Uroporphyrinogen decarboxylase.